Here is a 560-residue protein sequence, read N- to C-terminus: Arginine--tRNA ligase (560 aa).

The 'HIGH' region motif lies at Ala122 to His132.

This sequence belongs to the class-I aminoacyl-tRNA synthetase family.

It is found in the cytoplasm. It carries out the reaction tRNA(Arg) + L-arginine + ATP = L-arginyl-tRNA(Arg) + AMP + diphosphate. The protein is Arginine--tRNA ligase (argS) of Methanothermobacter thermautotrophicus (strain ATCC 29096 / DSM 1053 / JCM 10044 / NBRC 100330 / Delta H) (Methanobacterium thermoautotrophicum).